The chain runs to 247 residues: Probable transcriptional regulatory protein ETA_14870 (247 aa).

The tract at residues M1 to K20 is disordered.

Belongs to the TACO1 family.

It localises to the cytoplasm. The protein is Probable transcriptional regulatory protein ETA_14870 of Erwinia tasmaniensis (strain DSM 17950 / CFBP 7177 / CIP 109463 / NCPPB 4357 / Et1/99).